The following is a 720-amino-acid chain: Inactive serine protease PAMR1 (720 aa).

An N-terminal signal peptide occupies residues 1-21; that stretch reads MELGCWTQLGLTFLQLLLISS. Cystine bridges form between cysteine 128-cysteine 150, cysteine 177-cysteine 199, cysteine 239-cysteine 250, cysteine 244-cysteine 260, cysteine 262-cysteine 271, cysteine 280-cysteine 329, cysteine 315-cysteine 342, and cysteine 414-cysteine 442. Residues 128–236 enclose the CUB domain; the sequence is CGQVLRAPKG…DGFHAIFEEI (109 aa). An EGF-like domain is found at 235 to 272; that stretch reads EITACSSSPCFHDGTCVLDKAGSYKCACLAGYTGQRCE. Sushi domains lie at 278-344 and 387-444; these read RNCS…ICIK and APTK…SCIP. Positions 445-720 constitute a Peptidase S1 domain; it reads ICGKIENVTA…FKDWIERNMK (276 aa). Asparagine 451 carries N-linked (GlcNAc...) asparagine glycosylation. A disulfide bond links cysteine 489 and cysteine 505. An N-linked (GlcNAc...) asparagine glycan is attached at asparagine 614. Disulfide bonds link cysteine 630–cysteine 649 and cysteine 661–cysteine 697.

Belongs to the peptidase S1 family.

The protein resides in the secreted. May play a role in regeneration of skeletal muscle. In Pongo abelii (Sumatran orangutan), this protein is Inactive serine protease PAMR1 (PAMR1).